Here is a 65-residue protein sequence, read N- to C-terminus: Weak toxin CM-11 (65 aa).

Cystine bridges form between Cys3–Cys24, Cys6–Cys11, Cys17–Cys42, Cys46–Cys57, and Cys58–Cys63.

Belongs to the three-finger toxin family. Ancestral subfamily. Orphan group II sub-subfamily. In terms of tissue distribution, expressed by the venom gland.

The protein localises to the secreted. Binds with low affinity to muscular (alpha-1-beta-1-delta-epsilon/CHRNA1-CHRNB1-CHRND-CHRNE) and very low affinity to neuronal (alpha-7/CHRNA7) nicotinic acetylcholine receptor (nAChR). The sequence is that of Weak toxin CM-11 from Naja haje haje (Egyptian cobra).